Here is a 229-residue protein sequence, read N- to C-terminus: 5'-methylthioadenosine/S-adenosylhomocysteine nucleosidase (229 aa).

E12 (proton acceptor) is an active-site residue. Substrate is bound by residues G78, I152, and 173 to 174 (ME). Catalysis depends on D197, which acts as the Proton donor.

This sequence belongs to the PNP/UDP phosphorylase family. MtnN subfamily.

The enzyme catalyses S-adenosyl-L-homocysteine + H2O = S-(5-deoxy-D-ribos-5-yl)-L-homocysteine + adenine. The catalysed reaction is S-methyl-5'-thioadenosine + H2O = 5-(methylsulfanyl)-D-ribose + adenine. It catalyses the reaction 5'-deoxyadenosine + H2O = 5-deoxy-D-ribose + adenine. Its pathway is amino-acid biosynthesis; L-methionine biosynthesis via salvage pathway; S-methyl-5-thio-alpha-D-ribose 1-phosphate from S-methyl-5'-thioadenosine (hydrolase route): step 1/2. Its function is as follows. Catalyzes the irreversible cleavage of the glycosidic bond in both 5'-methylthioadenosine (MTA) and S-adenosylhomocysteine (SAH/AdoHcy) to adenine and the corresponding thioribose, 5'-methylthioribose and S-ribosylhomocysteine, respectively. Also cleaves 5'-deoxyadenosine, a toxic by-product of radical S-adenosylmethionine (SAM) enzymes, into 5-deoxyribose and adenine. This is 5'-methylthioadenosine/S-adenosylhomocysteine nucleosidase from Baumannia cicadellinicola subsp. Homalodisca coagulata.